Here is a 789-residue protein sequence, read N- to C-terminus: SH3 domain-containing protein 19 (789 aa).

Disordered stretches follow at residues 24–170 (TNTE…PPRL), 209–404 (DDDV…RPKP), and 472–497 (TPLD…SGAP). A Phosphoserine modification is found at S65. A compositionally biased stretch (basic and acidic residues) spans 296-305 (SHSDRTRNPE). Residues 335–351 (WRPPPKGAPERPPPPKL) are compositionally biased toward pro residues. Positions 352 to 361 (PASKSSNKNL) are enriched in low complexity. At S368 the chain carries Phosphoserine. SH3 domains are found at residues 414–476 (LSVP…PLDE), 494–553 (SGAP…VIVD), 570–629 (AKGP…LVGD), 660–719 (PPGE…PCPA), and 729–788 (PKGR…FLQV). The span at 474–484 (LDERPRGRPND) shows a compositional bias: basic and acidic residues. Residues 635 to 663 (ANILSTKVPPKTKNEDPGSNSQDSSPPGE) form a disordered region.

Interacts with ADAM12. Isoform 2 (but not isoform 1) interacts with ADAM9, ADAM10, ADAM15 and ADAM17. Interacts with SH3GL1 SH3 domain. Interacts via SH3 3 and SH3 4 or SH3 4 and SH3 5 domains with SOS2. Probably forms a trimeric complex with SH3GL1 and SOS2. Interacts with SH3YL1. In terms of tissue distribution, expressed in hair follicles.

It is found in the cytoplasm. Functionally, may play a role in regulating A disintegrin and metalloproteases (ADAMs) in the signaling of EGFR-ligand shedding. May be involved in suppression of Ras-induced cellular transformation and Ras-mediated activation of ELK1. Plays a role in the regulation of cell morphology and cytoskeletal organization. In Mus musculus (Mouse), this protein is SH3 domain-containing protein 19 (Sh3d19).